Consider the following 262-residue polypeptide: 3-methyl-2-oxobutanoate hydroxymethyltransferase (262 aa).

Mg(2+) contacts are provided by aspartate 42 and aspartate 81. 3-methyl-2-oxobutanoate is bound by residues 42-43 (DS), aspartate 81, and lysine 110. Glutamate 112 contributes to the Mg(2+) binding site. Glutamate 180 acts as the Proton acceptor in catalysis.

The protein belongs to the PanB family. As to quaternary structure, homodecamer; pentamer of dimers. Requires Mg(2+) as cofactor.

It localises to the cytoplasm. The catalysed reaction is 3-methyl-2-oxobutanoate + (6R)-5,10-methylene-5,6,7,8-tetrahydrofolate + H2O = 2-dehydropantoate + (6S)-5,6,7,8-tetrahydrofolate. Its pathway is cofactor biosynthesis; (R)-pantothenate biosynthesis; (R)-pantoate from 3-methyl-2-oxobutanoate: step 1/2. Functionally, catalyzes the reversible reaction in which hydroxymethyl group from 5,10-methylenetetrahydrofolate is transferred onto alpha-ketoisovalerate to form ketopantoate. The protein is 3-methyl-2-oxobutanoate hydroxymethyltransferase of Legionella pneumophila (strain Paris).